A 472-amino-acid polypeptide reads, in one-letter code: Eukaryotic translation initiation factor 2 subunit 3 (472 aa).

At Ala-2 the chain carries N-acetylalanine; partial. A tr-type G domain is found at 39 to 247 (QATINIGTIG…YIVKKIPVPL (209 aa)). Residues 48–55 (GHVAHGKS) form a G1 region. 51-56 (AHGKST) is a GTP binding site. The interval 76-80 (NITIK) is G2. The tract at residues 134-137 (DCPG) is G3. Residues 190-193 (NKID) and 225-227 (SAQ) contribute to the GTP site. The interval 190 to 193 (NKID) is G4. Residues 225-227 (SAQ) form a G5 region. Residues 457-469 (GQIRRGVTIKPTV) are interacts with CDC123.

Belongs to the TRAFAC class translation factor GTPase superfamily. Classic translation factor GTPase family. EIF2G subfamily. As to quaternary structure, eukaryotic translation initiation factor 2 eIF2 is a heterotrimeric complex composed of an alpha (EIF2S1), a beta (EIF2S2) and a gamma (EIF2S3) chain. eIF2 is member of the 43S pre-initiation complex (43S PIC).

Its subcellular location is the cytoplasm. The protein localises to the cytosol. It catalyses the reaction GTP + H2O = GDP + phosphate + H(+). In terms of biological role, member of the eIF2 complex that functions in the early steps of protein synthesis by forming a ternary complex with GTP and initiator tRNA. This complex binds to a 40S ribosomal subunit, followed by mRNA binding to form the 43S pre-initiation complex (43S PIC). Junction of the 60S ribosomal subunit to form the 80S initiation complex is preceded by hydrolysis of the GTP bound to eIF2 and release of an eIF2-GDP binary complex. In order for eIF2 to recycle and catalyze another round of initiation, the GDP bound to eIF2 must exchange with GTP by way of a reaction catalyzed by eIF-2B. The protein is Eukaryotic translation initiation factor 2 subunit 3 (EIF2S3) of Gallus gallus (Chicken).